Here is a 128-residue protein sequence, read N- to C-terminus: Large-conductance mechanosensitive channel (128 aa).

The Cytoplasmic segment spans residues 1–16 (MNFIKEFREFAMRGNV). Residues 17 to 45 (VDMAVGVIIGSAFGKIVSSLVSDIFTPVL) traverse the membrane as a helical segment. Over 46 to 74 (GILTGGIDFKDMKFVLAQAQGDVPAVTLN) the chain is Periplasmic. Residues 75–94 (YGLFIQNVIDFIIIAFAIFM) traverse the membrane as a helical segment. Topologically, residues 95-128 (MIKVINKVRKPEEKKTAPKAETLLTEIRDLLKNK) are cytoplasmic.

This sequence belongs to the MscL family. Homopentamer.

It localises to the cell inner membrane. Functionally, channel that opens in response to stretch forces in the membrane lipid bilayer. Forms a nonselective ion channel with a conductance of about 4 nanosiemens. May participate in the regulation of osmotic pressure changes within the cell. The polypeptide is Large-conductance mechanosensitive channel (Haemophilus influenzae (strain ATCC 51907 / DSM 11121 / KW20 / Rd)).